The primary structure comprises 219 residues: Regulatory protein YeiL (219 aa).

Residues 19 to 97 form a sensory domain region; the sequence is RLFHFLARDY…IEECWCLALP (79 aa). [4Fe-4S] cluster is bound by residues C68, C91, C93, and C116. The segment at 111–131 is dimer interface; that stretch reads FLRKLCVTLSHKNYRNIVSLT. The HTH crp-type domain maps to 136-199; sequence FPLVNRLAAF…KKGYLIKNRK (64 aa). A DNA-binding region (H-T-H motif) is located at residues 158–181; that stretch reads KHTQAAEYLGVSYRHLLYVLAQFI.

In terms of assembly, homodimer. Requires [4Fe-4S] cluster as cofactor.

The protein resides in the cytoplasm. Its function is as follows. Transcription regulator involved in mid-term, stationary-phase viability under nitrogen starvation. Might control expression of the salvage pathways or in some other way repress the recycling of nucleobases to nucleic acids and enhance their use as general nitrogen sources during nitrogen-limited growth. The protein is Regulatory protein YeiL (yeiL) of Escherichia coli O157:H7.